The following is a 92-amino-acid chain: Long neurotoxin 1 (92 aa).

Residues methionine 1–threonine 21 form the signal peptide. 5 disulfides stabilise this stretch: cysteine 24–cysteine 42, cysteine 35–cysteine 63, cysteine 48–cysteine 52, cysteine 67–cysteine 79, and cysteine 80–cysteine 85.

Belongs to the three-finger toxin family. Long-chain subfamily. Type II alpha-neurotoxin sub-subfamily. In terms of tissue distribution, expressed by the venom gland.

It is found in the secreted. Its function is as follows. Binds with high affinity to muscular (alpha-1/CHRNA1) and neuronal (alpha-7/CHRNA7) nicotinic acetylcholine receptor (nAChR) and inhibits acetylcholine from binding to the receptor, thereby impairing neuromuscular and neuronal transmission. This is Long neurotoxin 1 from Oxyuranus microlepidotus (Inland taipan).